We begin with the raw amino-acid sequence, 313 residues long: Porphobilinogen deaminase (313 aa).

An S-(dipyrrolylmethanemethyl)cysteine modification is found at cysteine 242.

It belongs to the HMBS family. In terms of assembly, monomer. Dipyrromethane serves as cofactor.

The catalysed reaction is 4 porphobilinogen + H2O = hydroxymethylbilane + 4 NH4(+). Its pathway is porphyrin-containing compound metabolism; protoporphyrin-IX biosynthesis; coproporphyrinogen-III from 5-aminolevulinate: step 2/4. In terms of biological role, tetrapolymerization of the monopyrrole PBG into the hydroxymethylbilane pre-uroporphyrinogen in several discrete steps. The sequence is that of Porphobilinogen deaminase from Pseudomonas entomophila (strain L48).